The chain runs to 1849 residues: SH3 and multiple ankyrin repeat domains protein 2 (1849 aa).

Positions 1–33 are disordered; the sequence is MPRSPTSSEDEMAQSFSDYSVGSESDSSKEETI. Residues 15-25 show a composition bias toward low complexity; it reads SFSDYSVGSES. 6 ANK repeats span residues 196–226, 230–259, 263–293, 297–326, 330–359, and 363–393; these read TGETPLTLAAQLDDSVEVIKALKNGGAHLDF, DGMTALHKAARARNQVALKTLLELGASPDY, YGLTPLYHTAIVGGDPYCCELLLHEHATVCC, NGWHEIHQACRYGHVQHLEHLLFYGADMSA, SGNTALHICALYNQDSCARVLLFRGGNKEL, and NSQTPFQVAIIAGNFELAEYIKNHKETDIVP. The disordered stretch occupies residues 451–493; sequence QQMPSKPEGAAKTIGSYVPGPRSRSPSLNRLGGAGEDGKRPQP. An SH3 domain is found at 526–585; the sequence is VPGRLFVAVKPYQPQVDGEIPLHRGDRVKVLSIGEGGFWEGSARGHIGWFPAECVEEVQC. Positions 626-720 constitute a PDZ domain; it reads TVVLQKKDNE…HLVLKVVTVT (95 aa). The span at 764–774 shows a compositional bias: basic and acidic residues; sequence SVRKKKDKPEE. A disordered region spans residues 764–808; sequence SVRKKKDKPEEIVPASKPSRAAENMAVEPRVATIKQRPSSRCFPA. Ser831 is subject to Phosphoserine. At Thr860 the chain carries Phosphothreonine. The segment at 878–910 is disordered; it reads LSMPDTSEDIPPPPQSVPPSPPPPSPTTYNCPK. Positions 887–903 are enriched in pro residues; it reads IPPPPQSVPPSPPPPSP. Ser960 is subject to Phosphoserine. Disordered regions lie at residues 1013-1293, 1328-1371, 1432-1526, and 1574-1594; these read LVKQ…RKGD, LQEE…TTVP, PALS…GGEN, and SFVIPPPAPPPPPGSAQPGMA. Positions 1040 to 1052 are enriched in low complexity; the sequence is STSSSGKSSQGSS. Residues 1086 to 1097 are compositionally biased toward basic and acidic residues; that stretch reads VRDREKRLEARR. Ser1099 bears the Phosphoserine mark. Residues 1128–1138 are compositionally biased toward acidic residues; sequence EEGDFADEDSA. Low complexity-rich tracts occupy residues 1159–1170, 1181–1199, and 1208–1221; these read GGAEASAPGEAG, GPESSPAVPSASSGTAGPG, and RLLDPSSPLALALS. Residues 1274 to 1293 are compositionally biased toward basic and acidic residues; sequence RRQETENKYETDLGRDRKGD. A Phosphothreonine modification is found at Thr1278. The SH3-binding signature appears at 1327–1333; sequence ALQEEDE. Low complexity predominate over residues 1343 to 1357; that stretch reads SSPSEVPEGVSETEG. Residues 1445-1460 are compositionally biased toward polar residues; it reads TPQSPSLNSSQPTNSA. A compositionally biased stretch (basic and acidic residues) spans 1494–1505; it reads VDSRSSSDHHLE. The segment covering 1506 to 1522 has biased composition (low complexity); it reads TTSTISTVSSISTLSSE. Residues 1577-1588 show a composition bias toward pro residues; sequence IPPPAPPPPPGS. Residue Thr1667 is glycosylated (O-linked (GlcNAc) threonine). Residues 1678–1692 are compositionally biased toward polar residues; that stretch reads FTVRPGTSQPITLQS. Residues 1678–1776 are disordered; it reads FTVRPGTSQP…SILQQPISNK (99 aa). Residues Ser1709 and Ser1713 each carry the phosphoserine modification. Low complexity-rich tracts occupy residues 1721–1738 and 1760–1774; these read TLPAPLSAATASPSPALS and RSRSPSPSILQQPIS. Positions 1786–1849 constitute an SAM domain; that stretch reads WTKPDVADWL…ERALKQLLDR (64 aa).

It belongs to the SHANK family. As to quaternary structure, is part of a complex with DLG4/PSD-95 and DLGAP1/GKAP. Interacts with CTTN/cortactin SH3 domain, DLGAP1/GKAP and alpha-latrotoxin receptor 1. Interacts with DNM2, DBNL, GRID2, BAIAP2, SLC9A3, PLCB3 and CFTR. Interacts (via proline-rich region) with PDE4D. Interacts with ABI1 (via SH3 domain). In terms of tissue distribution, isoform 3 is present in epithelial colonic cells (at protein level).

Its subcellular location is the apical cell membrane. It is found in the cytoplasm. The protein localises to the synapse. It localises to the postsynaptic density. The protein resides in the cell projection. Its subcellular location is the growth cone. It is found in the dendritic spine. Functionally, seems to be an adapter protein in the postsynaptic density (PSD) of excitatory synapses that interconnects receptors of the postsynaptic membrane including NMDA-type and metabotropic glutamate receptors, and the actin-based cytoskeleton. May play a role in the structural and functional organization of the dendritic spine and synaptic junction. The chain is SH3 and multiple ankyrin repeat domains protein 2 (SHANK2) from Homo sapiens (Human).